Consider the following 325-residue polypeptide: Pyruvate dehydrogenase E1 component subunit beta (325 aa).

Thiamine diphosphate is bound at residue glutamate 60.

Heterodimer of an alpha and a beta chain. Thiamine diphosphate serves as cofactor.

The catalysed reaction is N(6)-[(R)-lipoyl]-L-lysyl-[protein] + pyruvate + H(+) = N(6)-[(R)-S(8)-acetyldihydrolipoyl]-L-lysyl-[protein] + CO2. The pyruvate dehydrogenase complex catalyzes the overall conversion of pyruvate to acetyl-CoA and CO(2). It contains multiple copies of three enzymatic components: pyruvate dehydrogenase (E1), dihydrolipoamide acetyltransferase (E2) and lipoamide dehydrogenase (E3). The sequence is that of Pyruvate dehydrogenase E1 component subunit beta (pdhB) from Staphylococcus aureus (strain Mu50 / ATCC 700699).